The chain runs to 212 residues: RNA chaperone ProQ (212 aa).

Positions R114–V149 are disordered. Low complexity predominate over residues A118–K129. Residues K130–K141 show a composition bias toward basic residues.

It belongs to the ProQ family.

It is found in the cytoplasm. RNA chaperone with significant RNA binding, RNA strand exchange and RNA duplexing activities. In Shewanella piezotolerans (strain WP3 / JCM 13877), this protein is RNA chaperone ProQ.